Reading from the N-terminus, the 152-residue chain is Small ribosomal subunit protein uS19x (152 aa).

It belongs to the universal ribosomal protein uS19 family.

It is found in the cytoplasm. The protein is Small ribosomal subunit protein uS19x (RPS15D) of Arabidopsis thaliana (Mouse-ear cress).